Here is a 122-residue protein sequence, read N- to C-terminus: UPF0102 protein Gmet_2864 (122 aa).

It belongs to the UPF0102 family.

The polypeptide is UPF0102 protein Gmet_2864 (Geobacter metallireducens (strain ATCC 53774 / DSM 7210 / GS-15)).